The primary structure comprises 373 residues: P2Y purinoceptor 2 (373 aa).

The Extracellular portion of the chain corresponds to 1-32 (MAADLEPWNSTINGTWEGDELGYKCRFNEDFK). 2 N-linked (GlcNAc...) asparagine glycosylation sites follow: Asn-9 and Asn-13. Residues 33 to 59 (YVLLPVSYGVVCVLGLCLNVVALYIFL) traverse the membrane as a helical segment. Residues 60–70 (CRLKTWNASTT) lie on the Cytoplasmic side of the membrane. Residues 71 to 93 (YMFHLAVSDSLYAASLPLLVYYY) traverse the membrane as a helical segment. At 94–110 (ARGDHWPFSTVLCKLVR) the chain is on the extracellular side. Cys-106 and Cys-183 are joined by a disulfide. A helical transmembrane segment spans residues 111–129 (FLFYTNLYCSILFLTCISV). Residues 130-152 (HRCLGVLRPLHSLRWGRARYARR) are Cytoplasmic-facing. The chain crosses the membrane as a helical span at residues 153 to 172 (VAAVVWVLVLACQAPVLYFV). Residues 173–194 (TTSVRGTRITCHDTSARELFSH) lie on the Extracellular side of the membrane. The helical transmembrane segment at 195–220 (FVAYSSVMLGLLFAVPFSVILVCYVL) threads the bilayer. Over 221–246 (MARRLLKPAYGTTGGLPRAKRKSVRT) the chain is Cytoplasmic. A helical membrane pass occupies residues 247–269 (IALVLAVFALCFLPFHVTRTLYY). Topologically, residues 270–287 (SFRSLDLSCHTLNAINMA) are extracellular. A helical membrane pass occupies residues 288 to 309 (YKITRPLASANSCLDPVLYFLA). Over 310 to 373 (GQRLVRFARD…AGSETKDIRL (64 aa)) the chain is Cytoplasmic. Residues 318–373 (RDAKPPTEPTPSPQARRKLGLHRPNRTVRKDLSVSSDDSRRTESTPAGSETKDIRL) form a disordered region. Positions 332–344 (ARRKLGLHRPNRT) are enriched in basic residues. Residues 345–360 (VRKDLSVSSDDSRRTE) show a composition bias toward basic and acidic residues.

This sequence belongs to the G-protein coupled receptor 1 family. Spleen, testis, kidney, liver, lung, heart and brain.

Its subcellular location is the cell membrane. Functionally, receptor for ATP and UTP coupled to G-proteins that activate a phosphatidylinositol-calcium second messenger system. The affinity range is UTP = ATP &gt; ATP-gamma-S &gt;&gt; 2-methylthio-ATP = ADP. In Mus musculus (Mouse), this protein is P2Y purinoceptor 2 (P2ry2).